The following is a 748-amino-acid chain: Basic juvenile hormone-suppressible protein 1 (748 aa).

The first 17 residues, 1 to 17 (MRVLVLVASLGLRGSVV), serve as a signal peptide directing secretion.

This sequence belongs to the hemocyanin family. In terms of tissue distribution, fat body, and hemolymph of larvae.

This is Basic juvenile hormone-suppressible protein 1 (BJSP-1) from Trichoplusia ni (Cabbage looper).